Here is a 212-residue protein sequence, read N- to C-terminus: uncharacterized protein (212 aa).

The N-terminal stretch at 1–18 (MQLTQVLAVAILAAGVSA) is a signal peptide. The segment at 108–180 (VSHNRVNAKQ…KDYGHKDYGH (73 aa)) is disordered. Residues 117–180 (QRRDDKKDYG…KDYGHKDYGH (64 aa)) are compositionally biased toward basic and acidic residues. The 15 X 5 AA tandem repeats of K-D-Y-G-H stretch occupies residues 120–210 (DDKKDYGKND…KDYGYKGYDD (91 aa)). Copy 1 of the repeat occupies 123–127 (KDYGK). One copy of the 2; truncated repeat lies at 128–132 (NDYGK). 3 tandem repeats follow at residues 133–137 (KDYGK), 138–142 (KDYGK), and 143–147 (KDYGK). The stretch at 148–152 (KEYDP) is one 6; truncated repeat. 5 tandem repeats follow at residues 166–170 (KDYGH), 171–175 (KDYGH), 176–180 (KDYGH), 181–185 (KDYGH), and 186–190 (KDYGH). One copy of the 12; truncated repeat lies at 191–195 (DDYGY). Residues 196 to 200 (KGYDD) form a 13; truncated repeat. The 14; truncated repeat unit spans residues 201-205 (KDYGY). One copy of the 15; truncated repeat lies at 206–210 (KGYDD).

Its subcellular location is the secreted. This is an uncharacterized protein from Arthroderma benhamiae (strain ATCC MYA-4681 / CBS 112371) (Trichophyton mentagrophytes).